Reading from the N-terminus, the 702-residue chain is Elongation factor G 2 (702 aa).

The tr-type G domain occupies 8–290; the sequence is ERYRNIGISA…AVIDYLPSPV (283 aa). GTP-binding positions include 17–24, 88–92, and 142–145; these read AHIDAGKT, DTPGH, and NKMD.

The protein belongs to the TRAFAC class translation factor GTPase superfamily. Classic translation factor GTPase family. EF-G/EF-2 subfamily.

It is found in the cytoplasm. Its function is as follows. Catalyzes the GTP-dependent ribosomal translocation step during translation elongation. During this step, the ribosome changes from the pre-translocational (PRE) to the post-translocational (POST) state as the newly formed A-site-bound peptidyl-tRNA and P-site-bound deacylated tRNA move to the P and E sites, respectively. Catalyzes the coordinated movement of the two tRNA molecules, the mRNA and conformational changes in the ribosome. The polypeptide is Elongation factor G 2 (Cupriavidus metallidurans (strain ATCC 43123 / DSM 2839 / NBRC 102507 / CH34) (Ralstonia metallidurans)).